The sequence spans 484 residues: ATP synthase subunit beta (484 aa).

Residue 168–175 (GGAGVGKT) participates in ATP binding.

The protein belongs to the ATPase alpha/beta chains family. As to quaternary structure, F-type ATPases have 2 components, CF(1) - the catalytic core - and CF(0) - the membrane proton channel. CF(1) has five subunits: alpha(3), beta(3), gamma(1), delta(1), epsilon(1). CF(0) has three main subunits: a(1), b(2) and c(9-12). The alpha and beta chains form an alternating ring which encloses part of the gamma chain. CF(1) is attached to CF(0) by a central stalk formed by the gamma and epsilon chains, while a peripheral stalk is formed by the delta and b chains.

Its subcellular location is the cell membrane. It catalyses the reaction ATP + H2O + 4 H(+)(in) = ADP + phosphate + 5 H(+)(out). Produces ATP from ADP in the presence of a proton gradient across the membrane. The catalytic sites are hosted primarily by the beta subunits. The sequence is that of ATP synthase subunit beta from Arthrobacter sp. (strain FB24).